Here is a 391-residue protein sequence, read N- to C-terminus: UPF0229 protein BCB4264_A0587 (391 aa).

Positions 1–16 are enriched in polar residues; that stretch reads MGEENQPNYTISQENW. Disordered stretches follow at residues 1 to 31 and 80 to 117; these read MGEE…RHQE and HVGQ…GDAA. The segment covering 21 to 31 has biased composition (basic and acidic residues); it reads KGYDDQQRHQE. The segment covering 98 to 115 has biased composition (gly residues); sequence GSGGQKQKGPGKGQGAGD.

It belongs to the UPF0229 family.

In Bacillus cereus (strain B4264), this protein is UPF0229 protein BCB4264_A0587.